The primary structure comprises 1006 residues: E3 ubiquitin-protein ligase MIB1 (1006 aa).

The MIB/HERC2 1 domain maps to 6-74 (NNRVMVEGVG…AYDLRILDSA (69 aa)). Residues 80–132 (HDGTMCDTCRQQPIIGIRWKCAECTNYDLCTVCYHGDKHHLRHRFYRITTPGS) form a ZZ-type zinc finger. Zn(2+)-binding residues include Cys85, Cys88, Cys100, Cys103, Cys109, Cys112, His118, and His122. The 79-residue stretch at 143-221 (SKKITARGIF…MSDLKCVQDA (79 aa)) folds into the MIB/HERC2 2 domain. Phosphoserine is present on Ser408. 9 ANK repeats span residues 430-460 (DLNE…DVNG), 463-492 (AGHT…DVEA), 496-525 (DGDR…DLNA), 529-558 (RRQT…HPSL), 562-591 (EGDT…DVTI), 595-627 (NGFN…IVDE), 631-661 (DGYT…NLDI), 665-694 (NQQT…KLDI), and 698-729 (DGDT…KVDA). 2 RING-type zinc fingers span residues 819–854 (CMVC…LICK) and 866–901 (CVVC…VQCR). Residues 935–962 (QKDKDNTNVNADVQKLQQQLQDIKEQTM) adopt a coiled-coil conformation. The segment at 963–996 (CPVCLDRLKNMIFLCGHGTCQLCGDRMSECPICR) adopts an RING-type 3 zinc-finger fold.

Interacts with CEP131 and PCM1. Ubiquitinated; possibly via autoubiquitination. Ubiquitinated; this modification is inhibited in response to cellular stress, such as ultraviolet light (UV) radiation or heat shock. In terms of tissue distribution, widely expressed at low level. Expressed at higher level in spinal cord, ovary, whole brain, and all specific brain regions examined.

The protein resides in the cytoplasm. Its subcellular location is the cytoskeleton. It localises to the microtubule organizing center. The protein localises to the centrosome. It is found in the centriolar satellite. The protein resides in the cell membrane. It carries out the reaction S-ubiquitinyl-[E2 ubiquitin-conjugating enzyme]-L-cysteine + [acceptor protein]-L-lysine = [E2 ubiquitin-conjugating enzyme]-L-cysteine + N(6)-ubiquitinyl-[acceptor protein]-L-lysine.. It participates in protein modification; protein ubiquitination. Its function is as follows. E3 ubiquitin-protein ligase that mediates ubiquitination of Delta receptors, which act as ligands of Notch proteins. Positively regulates the Delta-mediated Notch signaling by ubiquitinating the intracellular domain of Delta, leading to endocytosis of Delta receptors. Probably mediates ubiquitination and subsequent proteasomal degradation of DAPK1, thereby antagonizing anti-apoptotic effects of DAPK1 to promote TNF-induced apoptosis. Involved in ubiquitination of centriolar satellite CEP131, CEP290 and PCM1 proteins and hence inhibits primary cilium formation in proliferating cells. Mediates 'Lys-63'-linked polyubiquitination of TBK1, which probably participates in kinase activation. (Microbial infection) During adenovirus infection, mediates ubiquitination of Core-capsid bridging protein. This allows viral genome delivery into nucleus for infection. The chain is E3 ubiquitin-protein ligase MIB1 (MIB1) from Homo sapiens (Human).